A 438-amino-acid polypeptide reads, in one-letter code: Nucleolar protein 12 (438 aa).

2 disordered regions span residues 1 to 28 (MGET…VDPT) and 60 to 94 (ANGV…LNDS). Over residues 60 to 71 (ANGVEEAAETIE) the composition is skewed to acidic residues. Phosphoserine occurs at positions 94 and 95. The interval 108–146 (AEEDEEKDKDSAGLINDEEDKSPAKQSVLEERTSQEDVK) is disordered. Residues 135-146 (VLEERTSQEDVK) show a composition bias toward basic and acidic residues. RRM domains follow at residues 164–262 (KTVF…SVSH) and 270–348 (RCVF…RAKS). 2 stretches are compositionally biased toward basic residues: residues 346–357 (AKSTKPKSITRS) and 402–412 (AKKKVNKKRKE). 2 disordered regions span residues 346–366 (AKST…KTRT) and 390–438 (EGHR…KKDK).

It belongs to the RRM RBM34 family.

It is found in the nucleus. The protein localises to the nucleolus. Its function is as follows. Involved in pre-25S rRNA processing. This Schizosaccharomyces pombe (strain 972 / ATCC 24843) (Fission yeast) protein is Nucleolar protein 12 (nop12).